The sequence spans 99 residues: UPF0320 protein YER188C-A (99 aa).

The protein belongs to the UPF0320 family.

This is UPF0320 protein YER188C-A from Saccharomyces cerevisiae (strain ATCC 204508 / S288c) (Baker's yeast).